The chain runs to 227 residues: Ribose-5-phosphate isomerase A (227 aa).

Substrate-binding positions include T26–T29, D82–D85, and K95–G98. The active-site Proton acceptor is E104. Residue K122 participates in substrate binding.

Belongs to the ribose 5-phosphate isomerase family. Homodimer.

It carries out the reaction aldehydo-D-ribose 5-phosphate = D-ribulose 5-phosphate. The protein operates within carbohydrate degradation; pentose phosphate pathway; D-ribose 5-phosphate from D-ribulose 5-phosphate (non-oxidative stage): step 1/1. Functionally, catalyzes the reversible conversion of ribose-5-phosphate to ribulose 5-phosphate. The chain is Ribose-5-phosphate isomerase A from Streptococcus pyogenes serotype M2 (strain MGAS10270).